Here is a 906-residue protein sequence, read N- to C-terminus: MNNKKTATNRKGMIPNRLNKFSIRKYSVGTASILVGTTLIFGLSGHEAKAAEHTNGELNQSKNEATAPSENKTTEKVDSRQQNNVEQSTTSNQPKVNESDNTSVKETTEEPQNTTSTQPTKKNNDATANKDNLAAQNISTQANDVSATPKTTTIKPRTLNRMAVNTVAAPQQGTNVNDKVHFSNIDIAIDKGHVNSTTGKTEFWATSSDVLKLKANYTIDDSVKEGDTFTFKYGQYFRPGSVRLPSQTQNLYNAQGNIIAKGIYDSTTNTTTYTFTNYVDQYTNVSGSFEQVAFAKRENATTDKTAYKMEVTLGNDAYSEEIIVDYGNKKAQPLISSTNYINNEDLSRNMTVYVNQPKNTYTKETFVSTLTGYKFNPDAKNFKIYEVTDQNQFVDSFTPDTSKLIDVTDKFKITYSNDNKTATVDLMNGQTNSNKQYIIQQVAYPDNTSTDNGKIDYTLDTDKTKYSWSNSYSSVNGSSTANGDQKKYNLGDYVWEDTNKDGKQDANEKGIKGVYVILKDSNGKELDRTTTDENGKYQFTGLGNGTYSVEFSTLAGYTPTTVNAGTDDAVDSDGLTTTGVIKDADNMTLDSGFYKTPKYSLGDYVWYDSNKDGKQDSTEKGIKGVKVTLQNEKGEVIGTTETDENGKYRFDNLDSGKYKVIFEKPAGLKQTGTNTTEDDKDADGGEVDVTITDHDDFTLDNGYFEEETSDSDSDSDSDSDSDSDSDSDSDSDSESDSDSDSDSDSDSDSDSDSDSDSDSDSESDSDSDSDSDSDSDSDSDSDSDSDSDSDSDSDSDSDSDSDSDSDSDSDSDSDSDSDSDSDSDSDSDSDSDSDSDSDSDSDSDSDAGKHTPVKPMSATKDHHNKAKALPETGSENNGSNNATLFGGLFAALGSLLLFGRRKKQNK.

Positions 1 to 50 (MNNKKTATNRKGMIPNRLNKFSIRKYSVGTASILVGTTLIFGLSGHEAKA) are cleaved as a signal peptide. The tract at residues 51–127 (AEHTNGELNQ…QPTKKNNDAT (77 aa)) is disordered. The ligand binding A region stretch occupies residues 51–486 (AEHTNGELNQ…GSSTANGDQK (436 aa)). Polar residues-rich tracts occupy residues 56–71 (GELN…PSEN) and 80–119 (RQQN…STQP). CNA-B domains lie at 487 to 597 (KYNL…YKTP) and 598 to 708 (KYSL…EEET). A disordered region spans residues 669-881 (KQTGTNTTED…TGSENNGSNN (213 aa)). Composition is skewed to acidic residues over residues 676–686 (TEDDKDADGGE) and 703–845 (YFEE…DSDS). The LPXTG sorting signal motif lies at 869–873 (LPETG). Thr872 is modified (pentaglycyl murein peptidoglycan amidated threonine). A propeptide spans 873–906 (GSENNGSNNATLFGGLFAALGSLLLFGRRKKQNK) (removed by sortase).

The protein belongs to the serine-aspartate repeat-containing protein (SDr) family. Homodimerizes; via N2-Domain. Interacts with host NRXN1; this interaction mediates bacterial attachment to host cells.

Its subcellular location is the secreted. The protein resides in the cell wall. Its function is as follows. Cell surface-associated calcium-binding protein which plays an important role in adhesion and pathogenesis. Mediates interactions with components of the extracellular matrix such as host NRXN1 to promote bacterial adhesion. In Staphylococcus aureus (strain MRSA252), this protein is Serine-aspartate repeat-containing protein C (sdrC).